Reading from the N-terminus, the 1357-residue chain is Kinectin (1357 aa).

The Cytoplasmic segment spans residues 1–6 (MEFYES). A helical; Signal-anchor for type II membrane protein transmembrane segment spans residues 7-29 (AYFIVLIPSIVITVIFLFFWLFM). Over 30 to 1357 (KETLYDEVLA…KEKEHYQVLE (1328 aa)) the chain is Lumenal. 2 disordered regions span residues 48-81 (IPTKTDKKKAEKKKNKKKEIQNGNLHESDSESVP) and 103-218 (NVVE…KQKT). Residue Ser-75 is modified to Phosphoserine; by FAM20C. At Ser-77 the chain carries Phosphoserine. Over residues 121 to 135 (QKPVLEEQVIKESDA) the composition is skewed to basic and acidic residues. Thr-153 bears the Phosphothreonine mark. Residue Ser-156 is modified to Phosphoserine. Residues 161–171 (SKKKPGQKKSK) show a composition bias toward basic residues. Asn-172, Asn-435, Asn-772, Asn-904, and Asn-1055 each carry an N-linked (GlcNAc...) asparagine glycan. Basic and acidic residues predominate over residues 172–182 (NGSDDQDKKVE). Residues 330–1356 (LIHQLQEKDK…TKEKEHYQVL (1027 aa)) are a coiled coil. Residue Ser-1084 is modified to Phosphoserine. N-linked (GlcNAc...) asparagine glycans are attached at residues Asn-1088 and Asn-1263. Ser-1313 bears the Phosphoserine mark. An N-linked (GlcNAc...) asparagine glycan is attached at Asn-1329.

This sequence belongs to the kinectin family. In terms of assembly, parallel homodimers formed between the membrane-bound and the cytosolic form, and also between 2 cytosolic forms. As to expression, high levels in peripheral blood lymphocytes, testis and ovary, lower levels in spleen, thymus, prostate, small intestine and colon.

It is found in the endoplasmic reticulum membrane. In terms of biological role, receptor for kinesin thus involved in kinesin-driven vesicle motility. Accumulates in integrin-based adhesion complexes (IAC) upon integrin aggregation by fibronectin. The protein is Kinectin (KTN1) of Homo sapiens (Human).